The primary structure comprises 631 residues: Dolichyl-diphosphooligosaccharide--protein glycosyltransferase subunit 2 (631 aa).

Positions Met-1–Ala-22 are cleaved as a signal peptide. Residues Leu-23–Val-540 are Lumenal-facing. N-linked (GlcNAc...) asparagine glycosylation occurs at Asn-106. A Glycyl lysine isopeptide (Lys-Gly) (interchain with G-Cter in ubiquitin) cross-link involves residue Lys-154. The helical transmembrane segment at Val-541–Ile-561 threads the bilayer. At Arg-562–Thr-571 the chain is on the cytoplasmic side. A helical membrane pass occupies residues Phe-572–Val-592. Residues Tyr-593–Gln-596 lie on the Lumenal side of the membrane. A helical membrane pass occupies residues Leu-597–Gly-617. At Asn-618–His-631 the chain is on the cytoplasmic side.

The protein belongs to the SWP1 family. Component of the oligosaccharyltransferase (OST) complex. OST exists in two different complex forms which contain common core subunits RPN1, RPN2, OST48, OST4, DAD1 and TMEM258, either STT3A or STT3B as catalytic subunits, and form-specific accessory subunits. STT3A complex assembly occurs through the formation of 3 subcomplexes. Subcomplex 1 contains RPN1 and TMEM258, subcomplex 2 contains the STT3A-specific subunits STT3A, DC2/OSTC, and KCP2 as well as the core subunit OST4, and subcomplex 3 contains RPN2, DAD1, and OST48. The STT3A complex can form stable complexes with the Sec61 complex or with both the Sec61 and TRAP complexes. Interacts with DDI2. Interacts with TMEM35A/NACHO.

Its subcellular location is the endoplasmic reticulum. It is found in the endoplasmic reticulum membrane. It participates in protein modification; protein glycosylation. Its function is as follows. Subunit of the oligosaccharyl transferase (OST) complex that catalyzes the initial transfer of a defined glycan (Glc(3)Man(9)GlcNAc(2) in eukaryotes) from the lipid carrier dolichol-pyrophosphate to an asparagine residue within an Asn-X-Ser/Thr consensus motif in nascent polypeptide chains, the first step in protein N-glycosylation. N-glycosylation occurs cotranslationally and the complex associates with the Sec61 complex at the channel-forming translocon complex that mediates protein translocation across the endoplasmic reticulum (ER). All subunits are required for a maximal enzyme activity. The sequence is that of Dolichyl-diphosphooligosaccharide--protein glycosyltransferase subunit 2 from Canis lupus familiaris (Dog).